The chain runs to 370 residues: Maturase K (370 aa).

It belongs to the intron maturase 2 family. MatK subfamily.

It is found in the plastid. The protein resides in the chloroplast. In terms of biological role, usually encoded in the trnK tRNA gene intron. Probably assists in splicing its own and other chloroplast group II introns. In Marchantia polymorpha (Common liverwort), this protein is Maturase K.